Reading from the N-terminus, the 705-residue chain is p-hydroxybenzoic acid--AMP ligase FadD22 (705 aa).

In terms of domain architecture, Carrier spans Glu-541 to Leu-619. At Ser-579 the chain carries O-(pantetheine 4'-phosphoryl)serine.

It belongs to the ATP-dependent AMP-binding enzyme family.

The catalysed reaction is holo-[4-hydroxyphenylalkanoate synthase] + 4-hydroxybenzoate + ATP = 4-hydroxyphenyl-[4-hydroxyphenylalkanoate synthase] + AMP + diphosphate. It participates in lipid metabolism; fatty acid biosynthesis. Catalyzes the adenylation of p-hydroxybenzoic acid (pHBA) to form p-hydroxybenzoic acid-AMP (pHBA-AMP), which is converted directly to p-hydroxybenzoyl-S-FadD22 (pHBA-S-FAdD22) thioester intermediate in a CoA-independent manner by attack of the phosphopantetheine thiol of FadD22. Usually, this intermediate primes the biosynthesis of the phenolphthiocerol (PPOL) by presenting the pHBA starter unit for elongation by Pks15/1, but M.tuberculosis lacks Pks15/1 due to a natural frameshift and thus is unable to produce PPOL. The chain is p-hydroxybenzoic acid--AMP ligase FadD22 (fadD22) from Mycobacterium tuberculosis (strain CDC 1551 / Oshkosh).